We begin with the raw amino-acid sequence, 481 residues long: Phosphoenolpyruvate phosphatase (481 aa).

The first 36 residues, 1-36 (MPIYTSRSCFYLLLFHIILLCSVDKTLCRQTSSFVR), serve as a signal peptide directing secretion. A glycan (N-linked (GlcNAc...) asparagine) is linked at Asn109. The Fe cation site is built by Asp168, Asp195, and Tyr198. Asp195 serves as a coordination point for Zn(2+). Asn206 carries N-linked (GlcNAc...) asparagine glycosylation. Zn(2+)-binding residues include Asn232 and His317. Asn232 is a substrate binding site. His327 serves as the catalytic Proton donor. Zn(2+) is bound at residue His354. 354–356 (HVH) is a binding site for substrate. His356 provides a ligand contact to Fe cation. Asn370 and Asn427 each carry an N-linked (GlcNAc...) asparagine glycan.

Belongs to the metallophosphoesterase superfamily. Purple acid phosphatase family.

The protein localises to the vacuole lumen. The catalysed reaction is phosphoenolpyruvate + H2O = pyruvate + phosphate. Its function is as follows. Phosphoenolpyruvate phosphatase that probably operates in the vacuole to release phosphate from phosphoenolpyruvate (PEP) under phosphorus starvation. The chain is Phosphoenolpyruvate phosphatase (ACPEPP) from Allium cepa (Onion).